The primary structure comprises 95 residues: Aspartyl/glutamyl-tRNA(Asn/Gln) amidotransferase subunit C (95 aa).

This sequence belongs to the GatC family. As to quaternary structure, heterotrimer of A, B and C subunits.

The catalysed reaction is L-glutamyl-tRNA(Gln) + L-glutamine + ATP + H2O = L-glutaminyl-tRNA(Gln) + L-glutamate + ADP + phosphate + H(+). It catalyses the reaction L-aspartyl-tRNA(Asn) + L-glutamine + ATP + H2O = L-asparaginyl-tRNA(Asn) + L-glutamate + ADP + phosphate + 2 H(+). In terms of biological role, allows the formation of correctly charged Asn-tRNA(Asn) or Gln-tRNA(Gln) through the transamidation of misacylated Asp-tRNA(Asn) or Glu-tRNA(Gln) in organisms which lack either or both of asparaginyl-tRNA or glutaminyl-tRNA synthetases. The reaction takes place in the presence of glutamine and ATP through an activated phospho-Asp-tRNA(Asn) or phospho-Glu-tRNA(Gln). This Chlorobium luteolum (strain DSM 273 / BCRC 81028 / 2530) (Pelodictyon luteolum) protein is Aspartyl/glutamyl-tRNA(Asn/Gln) amidotransferase subunit C.